A 214-amino-acid chain; its full sequence is Non-structural protein NP-1 (214 aa).

2 disordered regions span residues 1 to 87 (MSSE…TNPY) and 192 to 214 (ESEE…NASN). Residues 33–43 (SRSRSPIRRHG) are compositionally biased toward basic residues. The span at 44–55 (EKNLEYAHHSNQ) shows a compositional bias: basic and acidic residues. The segment covering 56 to 71 (ENRQSSYTALKTSDQA) has biased composition (polar residues). The span at 192–201 (ESEEVTDEEM) shows a compositional bias: acidic residues.

The protein belongs to the Bocaparvovirus Non-structural protein NP-1 family.

Its subcellular location is the host nucleus. In terms of biological role, required for the expression of the capsid proteins. Performs the splicing and internal polyadenylation of the viral capsid-encoding mRNA precursor, which allows its maturation and expression. Transactivates the viral promoter. The protein is Non-structural protein NP-1 (NP1) of Human bocavirus 2 (HBoV2).